The sequence spans 394 residues: Phosphopentomutase (394 aa).

Mn(2+) contacts are provided by D14, D287, H292, D328, H329, and H340.

Belongs to the phosphopentomutase family. The cofactor is Mn(2+).

The protein localises to the cytoplasm. It carries out the reaction 2-deoxy-alpha-D-ribose 1-phosphate = 2-deoxy-D-ribose 5-phosphate. The enzyme catalyses alpha-D-ribose 1-phosphate = D-ribose 5-phosphate. The protein operates within carbohydrate degradation; 2-deoxy-D-ribose 1-phosphate degradation; D-glyceraldehyde 3-phosphate and acetaldehyde from 2-deoxy-alpha-D-ribose 1-phosphate: step 1/2. In terms of biological role, isomerase that catalyzes the conversion of deoxy-ribose 1-phosphate (dRib-1-P) and ribose 1-phosphate (Rib-1-P) to deoxy-ribose 5-phosphate (dRib-5-P) and ribose 5-phosphate (Rib-5-P), respectively. This Listeria monocytogenes serovar 1/2a (strain ATCC BAA-679 / EGD-e) protein is Phosphopentomutase.